We begin with the raw amino-acid sequence, 484 residues long: Sodium/pantothenate symporter (484 aa).

13 helical membrane-spanning segments follow: residues 3-23 (LGIILPLIIYLTFVFGAAIFA), 45-65 (GFVLAMTTASTYASASSFVGG), 74-94 (LGWVLLAMIQVPVVWLALGAL), 124-144 (VWLSSLALLLAFFAAMTVQFI), 162-182 (LLLFALTVGIYTFIGGFRAVV), 190-210 (TVMIFGTIILLIGTIYALGGV), 238-258 (FMASFWILVCFGVVGLPHTAV), 273-293 (MLIGTIVLSIIMLGMHLAGAL), 307-327 (VIPTLMIKVLPPIVAGIFLAA), 366-386 (VSYFSSIITLILTALLIFAAL), 397-417 (LFAFGGLEAAFLWVIVLGIYW), 424-444 (GALSSMIIGLGSYILLTQLGI), and 446-466 (LFNFHQIVPSLVFGLIAFLVG).

It belongs to the sodium:solute symporter (SSF) (TC 2.A.21) family.

Its subcellular location is the cell inner membrane. The enzyme catalyses (R)-pantothenate(in) + Na(+)(in) = (R)-pantothenate(out) + Na(+)(out). Its function is as follows. Catalyzes the sodium-dependent uptake of extracellular pantothenate. The polypeptide is Sodium/pantothenate symporter (panF) (Haemophilus influenzae (strain ATCC 51907 / DSM 11121 / KW20 / Rd)).